The primary structure comprises 252 residues: 5'-nucleotidase SurE (252 aa).

Residues D8, D9, S40, and N93 each coordinate a divalent metal cation.

It belongs to the SurE nucleotidase family. The cofactor is a divalent metal cation.

The protein localises to the cytoplasm. The enzyme catalyses a ribonucleoside 5'-phosphate + H2O = a ribonucleoside + phosphate. In terms of biological role, nucleotidase that shows phosphatase activity on nucleoside 5'-monophosphates. The polypeptide is 5'-nucleotidase SurE (Erythrobacter litoralis (strain HTCC2594)).